The following is an 808-amino-acid chain: uncharacterized protein (808 aa).

35 to 42 (GPNNVGKT) provides a ligand contact to ATP.

This is an uncharacterized protein from Methanocaldococcus jannaschii (strain ATCC 43067 / DSM 2661 / JAL-1 / JCM 10045 / NBRC 100440) (Methanococcus jannaschii).